The sequence spans 1568 residues: Plexin-C1 (1568 aa).

The N-terminal stretch at 1-34 (MEVSRRKAPPRPPRPAAPLPLLAYLLALAAPGRG) is a signal peptide. The region spanning 35 to 452 (ADEPVWRSEQ…AGKEVRRIRV (418 aa)) is the Sema domain. Residues 35 to 944 (ADEPVWRSEQ…YVEQESVPST (910 aa)) are Extracellular-facing. A disulfide bridge links C64 with C87. N-linked (GlcNAc...) asparagine glycosylation is found at N86, N141, and N149. 3 disulfide bridges follow: C156–C194, C226–C354, and C283–C329. N-linked (GlcNAc...) asparagine glycosylation is found at N241 and N252. N-linked (GlcNAc...) asparagine glycosylation is found at N386 and N407. 4 cysteine pairs are disulfide-bonded: C455–C472, C461–C506, C464–C481, and C475–C487. N548, N582, N653, N692, N771, N796, N821, N871, and N890 each carry an N-linked (GlcNAc...) asparagine glycan. Residues 945-965 (WYFLIVLPVLLVIVIFAAVGV) traverse the membrane as a helical segment. The Cytoplasmic portion of the chain corresponds to 966–1568 (TRHKSKELSR…FDEKKKCKWM (603 aa)). Residue S978 is modified to Phosphoserine.

It belongs to the plexin family. Monomer. Homodimer. Interacts with SEMA7A. N-glycosylated. Detected in heart, brain, lung, spleen and placenta.

It is found in the membrane. Functionally, receptor for SEMA7A, for smallpox semaphorin A39R, vaccinia virus semaphorin A39R and for herpesvirus Sema protein. Binding of semaphorins triggers cellular responses leading to the rearrangement of the cytoskeleton and to secretion of IL6 and IL8. In Homo sapiens (Human), this protein is Plexin-C1 (PLXNC1).